The primary structure comprises 256 residues: Ubiquinone/menaquinone biosynthesis C-methyltransferase UbiE (256 aa).

Residues T79, D100, and 128 to 129 (DA) contribute to the S-adenosyl-L-methionine site.

The protein belongs to the class I-like SAM-binding methyltransferase superfamily. MenG/UbiE family.

It carries out the reaction a 2-demethylmenaquinol + S-adenosyl-L-methionine = a menaquinol + S-adenosyl-L-homocysteine + H(+). It catalyses the reaction a 2-methoxy-6-(all-trans-polyprenyl)benzene-1,4-diol + S-adenosyl-L-methionine = a 5-methoxy-2-methyl-3-(all-trans-polyprenyl)benzene-1,4-diol + S-adenosyl-L-homocysteine + H(+). It functions in the pathway quinol/quinone metabolism; menaquinone biosynthesis; menaquinol from 1,4-dihydroxy-2-naphthoate: step 2/2. The protein operates within cofactor biosynthesis; ubiquinone biosynthesis. Functionally, methyltransferase required for the conversion of demethylmenaquinol (DMKH2) to menaquinol (MKH2) and the conversion of 2-polyprenyl-6-methoxy-1,4-benzoquinol (DDMQH2) to 2-polyprenyl-3-methyl-6-methoxy-1,4-benzoquinol (DMQH2). This chain is Ubiquinone/menaquinone biosynthesis C-methyltransferase UbiE, found in Pseudomonas fluorescens (strain Pf0-1).